Consider the following 602-residue polypeptide: Multicopper oxidase aurL2 (602 aa).

Positions 1–17 (MLFRFLALLPFVAGAFA) are cleaved as a signal peptide. 2 consecutive Plastocyanin-like domains span residues 38–149 (DIKI…VRDA) and 160–317 (IPLL…KYRC). N52 and N80 each carry an N-linked (GlcNAc...) asparagine glycan. Cu cation contacts are provided by H84, H86, H130, and H132. 7 N-linked (GlcNAc...) asparagine glycosylation sites follow: N201, N247, N337, N383, N387, N419, and N424. In terms of domain architecture, Plastocyanin-like 3 spans 421-556 (TTPNYTLALE…QVMGMATVWV (136 aa)). H469 serves as a coordination point for Cu cation. N-linked (GlcNAc...) asparagine glycans are attached at residues N482 and N486.

Belongs to the multicopper oxidase family.

Its pathway is pigment biosynthesis. Multicopper oxidase; part of the gene cluster that mediates the biosynthesis of aurofusarin, a red mycelium pigment which is acting as a mycotoxin. The first step is performed by the polyketide synthase which condenses one acetyl-CoA and 6 malonyl-CoA units to form the first intermediate, the cyclic heptaketide and yellow pigment YWA1. The C2 hydroxyl group in the pyrone ring of YWA1 is probably formed during ring closure by an aldol-type cyclization reaction. The dehydratase aurZ then acts as the first tailoring enzyme in the aurofusarin biosynthetic pathway by converting YWA1 to nor-rubrofusarin. Nor-rubrofusarin is then methylated to rubrofusarin by the O-methyltransferase aurJ. Rubrofusarin is then transported across the plasma membrane by the rubrofusarin-specific pump aurT for further enzymatic processing by the extracellular complex composed of GIP1, aurF, aurO and aurS to yield aurofusarin. The protein is Multicopper oxidase aurL2 (aurL2) of Gibberella zeae (strain ATCC MYA-4620 / CBS 123657 / FGSC 9075 / NRRL 31084 / PH-1) (Wheat head blight fungus).